Consider the following 997-residue polypeptide: MKSYISLFFILCVIFNKNVIKCTGESQTGNTGGGQAGNTGGDQAGSTGGSPQGSTGASPQGSTGASPQGSTGASQPGSSEPSNPVSSGHSVSTVSVSQTSTSSEKQDTIQVKSALLKDYMGLKVTGPCNENFIMFLVPHIYIDVDTEDTNIELRTTLKKTNNAISFESNSGSLEKKKYVKLPSNGTTGEQGSSTGTVRGDTEPISDSSSSSSSSSSSSSSSSSSSSSSSSSSSESLPANGPDSPTVKPPRNLQNICETGKNFKLVVYIKENTLILKWKVYGETKDTTENNKVDVRKYLINEKETPFTNILIHAYKEHNGTNLIESKNYAIGSDIPEKCDTLASNCFLSGNFNIEKCFQCALLVEKENKNDVCYKYLSEDIVSKFKEIKAETEDDDEDDYTEYKLTESIDNILVKMFKTNENNDKSELIKLEEVDDSLKLELMNYCSLLKDVDTTGTLDNYGMGNEMDIFNNLKRLLIYHSEENINTLKNKFRNAAVCLKNVDDWIVNKRGLVLPELNYDLEYFNEHLYNDKNSPEDKDNKGKGVVHVDTTLEKEDTLSYDNSDNMFCNKEYCNRLKDENNCISNLQVEDQGNCDTSWIFASKYHLETIRCMKGYEPTKISALYVANCYKGEHKDRCDEGSSPMEFLQIIEDYGFLPAESNYPYNYVKVGEQCPKVEDHWMNLWDNGKILHNKNEPNSLDGKGYTAYESERFHDNMDAFVKIIKTEVMNKGSVIAYIKAENVMGYEFSGKKVQNLCGDDTADHAVNIVGYGNYVNSEGEKKSYWIVRNSWGPYWGDEGYFKVDMYGPTHCHFNFIHSVVIFNVDLPMNNKTTKKESKIYDYYLKASPEFYHNLYFKNFNVGKKNLFSEKEDNENNKKLGNNYIIFGQDTAGSGQSGKESNTALESAGTSNEVSERVHVYHILKHIKDGKIRMGMRKYIDTQDVNKKHSCTRSYAFNPENYEKCVNLCNVNWKTCEEKTSPGLCLSKLDTNNECYFCYV.

Positions 1 to 22 (MKSYISLFFILCVIFNKNVIKC) are cleaved as a signal peptide. 2 disordered regions span residues 26-107 (SQTG…EKQD) and 181-252 (LPSN…PRNL). Residues 30–51 (NTGGGQAGNTGGDQAGSTGGSP) show a composition bias toward gly residues. Over residues 52–67 (QGSTGASPQGSTGASP) the composition is skewed to low complexity. A compositionally biased stretch (polar residues) spans 68–84 (QGSTGASQPGSSEPSNP). Composition is skewed to low complexity over residues 85-103 (VSSG…STSS), 183-196 (SNGT…STGT), and 205-235 (SDSS…SSES). Phosphoserine is present on Ser183. An N-linked (GlcNAc...) asparagine glycan is attached at Asn184. The segment at 216 to 253 (SSSSSSSSSSSSSSSSSSESLPANGPDSPTVKPPRNLQ) is interaction with PTKL. N-linked (GlcNAc...) asparagine glycosylation occurs at Asn318. The interaction with host VTN stretch occupies residues 373–390 (YKYLSEDIVSKFKEIKAE). Cys445 and Cys497 form a disulfide bridge. Thr549 carries the post-translational modification Phosphothreonine; by CPK1. Cystine bridges form between Cys567–Cys572, Cys581–Cys610, Cys593–Cys636, Cys627–Cys672, and Cys755–Cys809. A thiol-protease-like region spans residues 579–997 (NNCISNLQVE…TNNECYFCYV (419 aa)). Active-site residues include His762 and Asn787. Asn828 is a glycosylation site (N-linked (GlcNAc...) asparagine). A propeptide spans 843 to 886 (KASPEFYHNLYFKNFNVGKKNLFSEKEDNENNKKLGNNYIIFGQ) (inhibition peptide). Ser866 carries the post-translational modification Phosphoserine.

Belongs to the peptidase C1 family. As to quaternary structure, may interact (via C-terminus) with PTKL (via SAM domain). Interacts (via C-terminus) with human VTN (via hemopexin repeat 2); may form heterotetramers of two VTN and SERA5 P47 heterodimers; the interaction may protect merozoites from phagocytosis by host monocytes; VTN glycosylation appears to be dispensable for the interaction. In terms of assembly, monomer. Interacts with kinase CPK1/CDPK1 at the schizont stage. In terms of processing, phosphorylation by CPK1/CDPK1 increases SERA5 protease activity towards a synthetic peptide in vitro. Just prior to merozoite egress from host erythrocytes, proteolytically cleaved into multiple fragments. Cleaved by SUB1 into p47 and p73, p73 is further cleaved by SUB1 into p56 and p18 and p56 is further processed into p50 by an unidentified protease. p47 remains covalently associated with p18 via disulfide bond. p47 can be processed into p25n and p25c by SUB1. p25c and p25n remain associated with p18. Proteolytic processing is essential for merozoite egress from host erythrocytes. The cleavage of the propeptide to produce p50 is necessary for protease activity and to promote merozoite egress.

Its subcellular location is the parasitophorous vacuole. The protein localises to the secreted. It is found in the cell membrane. Functionally, plays an essential role during the asexual blood stage development by controlling the kinetics of merozoite egress from host erythrocytes. Specifically, prevents premature rupture of the parasitophorous vacuole and host erythrocyte membranes. May prevent merozoite phagocytosis by host monocytes via interaction with host VTN at the merozoite surface. Plays a role in parasite growth. Its function is as follows. Protease activity is controversial. Has been shown in a number of studies to have protease activity towards a synthetic peptide in vitro. Has also been shown to lack protease activity towards a synthetic peptide in vitro. The polypeptide is Serine-repeat antigen protein 5 (Plasmodium falciparum (isolate 3D7)).